The chain runs to 261 residues: tRNA pseudouridine synthase A (261 aa).

The active-site Nucleophile is aspartate 51. Residue tyrosine 109 coordinates substrate.

Belongs to the tRNA pseudouridine synthase TruA family. In terms of assembly, homodimer.

The enzyme catalyses uridine(38/39/40) in tRNA = pseudouridine(38/39/40) in tRNA. Formation of pseudouridine at positions 38, 39 and 40 in the anticodon stem and loop of transfer RNAs. This chain is tRNA pseudouridine synthase A, found in Idiomarina loihiensis (strain ATCC BAA-735 / DSM 15497 / L2-TR).